The following is a 340-amino-acid chain: Ribosomal RNA small subunit methyltransferase C (340 aa).

This sequence belongs to the methyltransferase superfamily. RsmC family. As to quaternary structure, monomer.

Its subcellular location is the cytoplasm. It carries out the reaction guanosine(1207) in 16S rRNA + S-adenosyl-L-methionine = N(2)-methylguanosine(1207) in 16S rRNA + S-adenosyl-L-homocysteine + H(+). Its function is as follows. Specifically methylates the guanine in position 1207 of 16S rRNA in the 30S particle. The polypeptide is Ribosomal RNA small subunit methyltransferase C (Vibrio cholerae serotype O1 (strain ATCC 39541 / Classical Ogawa 395 / O395)).